A 312-amino-acid polypeptide reads, in one-letter code: Glutathione synthetase (312 aa).

Residues 125-309 (KIFVTEFPDL…IAALFWDAVE (185 aa)) form the ATP-grasp domain. Position 151–207 (151–207 (RREFGDIILKPLYGNGGAGVFHLADGDRNLTSLLEMFGQLFREPFIAQRYLKDVRAG)) interacts with ATP. Glu-280 and Asn-282 together coordinate Mg(2+).

This sequence belongs to the prokaryotic GSH synthase family. Mg(2+) is required as a cofactor. Requires Mn(2+) as cofactor.

The enzyme catalyses gamma-L-glutamyl-L-cysteine + glycine + ATP = glutathione + ADP + phosphate + H(+). The protein operates within sulfur metabolism; glutathione biosynthesis; glutathione from L-cysteine and L-glutamate: step 2/2. The polypeptide is Glutathione synthetase (Brucella melitensis biotype 1 (strain ATCC 23456 / CCUG 17765 / NCTC 10094 / 16M)).